We begin with the raw amino-acid sequence, 193 residues long: Apoptosis-associated speck-like protein containing a CARD (193 aa).

The Pyrin domain occupies 1–91 (MGRARDAILD…AEQLQTTKEE (91 aa)). Residues Lys55 and Lys172 each participate in a glycyl lysine isopeptide (Lys-Gly) (interchain with G-Cter in ubiquitin) cross-link. In terms of domain architecture, CARD spans 105 to 193 (STARTGHFVD…PYLVMDLEQS (89 aa)). Position 193 is a phosphoserine (Ser193).

As to quaternary structure, self-associates; enforced oligomerization induces apoptosis, NF-kappa-B regulation and interleukin-1 beta secretion. Homooligomers can form disk-like particles of approximately 12 nm diameter and approximately 1 nm height. Component of several inflammasomes containing one pattern recognition receptor/sensor, such as NLRP2, NLRP3, NLRP6, NLRC4, AIM2, MEFV or NOD2, and probably NLRC4 or NLRP12. Major component of the ASC pyroptosome, a 1-2 um supramolecular assembly (one per macrophage cell) which consists of oligomerized PYCARD dimers and CASP1. Interacts with CASP1 (precursor form); the interaction induces activation of CASP1 leading to the processing of interleukin-1 beta; PYCARD competes with RIPK2 for binding to CASP1. Interacts with NLRP3; the interaction requires the homooligomerization of NLRP3. Interacts with NLRP2, NLRC4, MEFV, CARD16, AIM2, NOD2, RIGI, RIPK2, PYDC1, PYDC2, NLRP10, CHUK, IKBKB and BAX. Interacts with CASP8. Component of the AIM2 PANoptosome complex, a multiprotein complex that drives inflammatory cell death (PANoptosis). In terms of processing, phosphorylated. Post-translationally, 'Lys-63'-linked polyubiquitination by TRAF3 is critical for speck formation and inflammasome activation. 'Lys-63'-linked deubiquitinated by USP50; a crucial step for NLRP3-mediated inflammasome activation. 'Lys-63'-linked polyubiquitination by PELI1 is also critical for speck formation and inflammasome activation. Deubiquitinated by USP3 that cleaves 'Lys-48'-linked ubiquitin chains and strengthens its stability by blocking proteasomal degradation. Expressed in small intestine, colon, thymus, spleen, brain, heart, skeletal muscle, kidney, lung and liver.

It is found in the cytoplasm. It localises to the inflammasome. The protein localises to the endoplasmic reticulum. Its subcellular location is the mitochondrion. The protein resides in the nucleus. Functionally, functions as a key mediator in apoptosis and inflammation. Promotes caspase-mediated apoptosis involving predominantly caspase-8 and also caspase-9 in a probable cell type-specific manner. Involved in activation of the mitochondrial apoptotic pathway, promotes caspase-8-dependent proteolytic maturation of BID independently of FADD in certain cell types and also mediates mitochondrial translocation of BAX and activates BAX-dependent apoptosis coupled to activation of caspase-9, -2 and -3. Involved in innate immune response by acting as an integral adapter in the assembly of various inflammasomes (NLRP2, NLRP3, NLRP6 and AIM2) which recruit and activate caspase-1 leading to processing and secretion of pro-inflammatory cytokines. Caspase-1-dependent inflammation leads to macrophage pyroptosis, a form of cell death. The function as activating adapter in different types of inflammasomes is mediated by the pyrin and CARD domains and their homotypic interactions. Clustered PYCARD nucleates the formation of caspase-1 filaments through the interaction of their respective CARD domains, acting as a platform for of caspase-1 polymerization. In the NLRC4 inflammasomes seems not be required but facilitates the processing of procaspase-1. In cooperation with NOD2 involved in an inflammasome activated by bacterial muramyl dipeptide leading to caspase-1 activation. May be involved in RIGI-triggered pro-inflammatory responses and inflammasome activation. In collaboration with AIM2 which detects cytosolic double-stranded DNA may also be involved in a caspase-1-independent cell death that involves caspase-8. In adaptive immunity may be involved in maturation of dendritic cells to stimulate T-cell immunity and in cytoskeletal rearrangements coupled to chemotaxis and antigen uptake may be involved in post-transcriptional regulation of the guanine nucleotide exchange factor DOCK2; the latter function is proposed to involve the nuclear form. Also involved in transcriptional activation of cytokines and chemokines independent of the inflammasome; this function may involve AP-1, NF-kappa-B, MAPK and caspase-8 signaling pathways. For regulation of NF-kappa-B activating and inhibiting functions have been reported. Modulates NF-kappa-B induction at the level of the IKK complex by inhibiting kinase activity of CHUK and IKBK. Proposed to compete with RIPK2 for association with CASP1 thereby down-regulating CASP1-mediated RIPK2-dependent NF-kappa-B activation and activating interleukin-1 beta processing. Modulates host resistance to DNA virus infection, probably by inducing the cleavage of and inactivating CGAS in presence of cytoplasmic double-stranded DNA. The chain is Apoptosis-associated speck-like protein containing a CARD (Pycard) from Mus musculus (Mouse).